The following is a 142-amino-acid chain: Large ribosomal subunit protein uL13 (142 aa).

It belongs to the universal ribosomal protein uL13 family. Part of the 50S ribosomal subunit.

This protein is one of the early assembly proteins of the 50S ribosomal subunit, although it is not seen to bind rRNA by itself. It is important during the early stages of 50S assembly. The polypeptide is Large ribosomal subunit protein uL13 (Citrobacter koseri (strain ATCC BAA-895 / CDC 4225-83 / SGSC4696)).